The following is a 197-amino-acid chain: Large ribosomal subunit protein bL25 (197 aa).

It belongs to the bacterial ribosomal protein bL25 family. CTC subfamily. As to quaternary structure, part of the 50S ribosomal subunit; part of the 5S rRNA/L5/L18/L25 subcomplex. Contacts the 5S rRNA. Binds to the 5S rRNA independently of L5 and L18.

In terms of biological role, this is one of the proteins that binds to the 5S RNA in the ribosome where it forms part of the central protuberance. The polypeptide is Large ribosomal subunit protein bL25 (Hydrogenobaculum sp. (strain Y04AAS1)).